A 353-amino-acid chain; its full sequence is Peroxisome assembly protein 12-A (353 aa).

The Peroxisomal matrix portion of the chain corresponds to 1–19 (MAERGAHITTTSASDDRPS). A helical transmembrane segment spans residues 20 to 47 (IFEVVAQESLMAAARPALHHIVKVLAES). Over 48–51 (NPSR) the chain is Cytoplasmic. Residues 52–76 (YGTLWRWFDELYTLLDWLLQQHYLS) form a helical membrane-spanning segment. The Peroxisomal matrix segment spans residues 77 to 104 (WASASFSENFYGLKRITLGKEVGQRNLP). Residues 105 to 134 (RKEYWKSLLLLVLIPYLRVKLEKIVNRLRE) form a helical membrane-spanning segment. Residues 135-139 (EQDYS) are Cytoplasmic-facing. The chain crosses the membrane as a helical span at residues 140-178 (IQNPTSFHKRCYKAILASYPFVKLGWEAWFLFYQLRYIL). The Peroxisomal matrix segment spans residues 179-243 (WNGKNHSPLL…LGAVALSVSS (65 aa)). A helical transmembrane segment spans residues 244-271 (SLSLGVFFLQFLDWWYSAENQETLKSLN). Residues 272–353 (NLPVPPPPIH…HLIKLYTPDG (82 aa)) lie on the Cytoplasmic side of the membrane. 4 residues coordinate Zn(2+): Cys-298, Cys-301, Cys-319, and Cys-322. The RING-type; degenerate zinc-finger motif lies at 298–337 (CPLCRKVRVNDTALGTSGYVFCYRCAYYYVKTHQRCPVSG).

Belongs to the pex2/pex10/pex12 family. As to quaternary structure, component of the PEX2-PEX10-PEX12 retrotranslocation channel.

Its subcellular location is the peroxisome membrane. The protein operates within protein modification; protein ubiquitination. In terms of biological role, component of a retrotranslocation channel required for peroxisome organization by mediating export of the PEX5 receptor from peroxisomes to the cytosol, thereby promoting PEX5 recycling. The retrotranslocation channel is composed of PEX2, PEX10 and PEX12; each subunit contributing transmembrane segments that coassemble into an open channel that specifically allows the passage of PEX5 through the peroxisomal membrane. PEX12 also regulates PEX5 recycling by activating the E3 ubiquitin-protein ligase activity of PEX10. When PEX5 recycling is compromised, PEX12 stimulates PEX10-mediated polyubiquitination of PEX5, leading to its subsequent degradation. The protein is Peroxisome assembly protein 12-A of Xenopus laevis (African clawed frog).